A 238-amino-acid polypeptide reads, in one-letter code: Ion-translocating oxidoreductase complex subunit E (238 aa).

The next 5 helical transmembrane spans lie at 41 to 61 (LGLG…VSLV), 71 to 91 (LPAF…LMQA), 95 to 115 (ELYQ…VILG), 130 to 150 (SFDG…LGGL), and 184 to 204 (GFLL…LIAL).

This sequence belongs to the NqrDE/RnfAE family. The complex is composed of six subunits: RnfA, RnfB, RnfC, RnfD, RnfE and RnfG.

It is found in the cell inner membrane. Functionally, part of a membrane-bound complex that couples electron transfer with translocation of ions across the membrane. This chain is Ion-translocating oxidoreductase complex subunit E, found in Pseudomonas aeruginosa (strain UCBPP-PA14).